A 354-amino-acid polypeptide reads, in one-letter code: Kelch domain-containing protein 8B (354 aa).

Kelch repeat units follow at residues 1–31 (MAAGGGRAFAWQVFPPMPTCRVYGTVAHQDG), 32–79 (HLLV…VLGK), 81–127 (VLVV…ERDG), 128–175 (MVYA…LHGN), 176–222 (KIYV…MAEG), 224–281 (VFSL…SLGG), 282–329 (NIVA…QAGP), and 331–354 (LFVIGGVAQGPSQAVEALCLRDGV).

Its subcellular location is the cytoplasm. It is found in the midbody. Functionally, involved in pinching off the separated nuclei at the cleavage furrow and in cytokinesis. Required for mitotic integrity and maintenance of chromosomal stability. Protects cells against mitotic errors, centrosomal amplification, micronucleus formation and aneuploidy. Plays a key role of midbody function involving abscission of the daughter cells during cytokinesis and appropriate chromosomal and nuclear segregation into the daughter cells. This Mus musculus (Mouse) protein is Kelch domain-containing protein 8B (Klhdc8b).